A 292-amino-acid chain; its full sequence is NAD kinase (292 aa).

Asp-72 functions as the Proton acceptor in the catalytic mechanism. Residues 72–73, 146–147, His-157, Arg-174, Asp-176, and 187–192 each bind NAD(+); these read DG, NE, and TAYSLS.

Belongs to the NAD kinase family. Requires a divalent metal cation as cofactor.

The protein resides in the cytoplasm. It carries out the reaction NAD(+) + ATP = ADP + NADP(+) + H(+). In terms of biological role, involved in the regulation of the intracellular balance of NAD and NADP, and is a key enzyme in the biosynthesis of NADP. Catalyzes specifically the phosphorylation on 2'-hydroxyl of the adenosine moiety of NAD to yield NADP. This chain is NAD kinase, found in Shewanella loihica (strain ATCC BAA-1088 / PV-4).